The chain runs to 211 residues: FMN-dependent NADH:quinone oxidoreductase (211 aa).

Residues 17–19 (SYS) and 102–105 (MWNF) contribute to the FMN site.

It belongs to the azoreductase type 1 family. Homodimer. FMN serves as cofactor.

It catalyses the reaction 2 a quinone + NADH + H(+) = 2 a 1,4-benzosemiquinone + NAD(+). It carries out the reaction N,N-dimethyl-1,4-phenylenediamine + anthranilate + 2 NAD(+) = 2-(4-dimethylaminophenyl)diazenylbenzoate + 2 NADH + 2 H(+). Its function is as follows. Quinone reductase that provides resistance to thiol-specific stress caused by electrophilic quinones. In terms of biological role, also exhibits azoreductase activity. Catalyzes the reductive cleavage of the azo bond in aromatic azo compounds to the corresponding amines. The polypeptide is FMN-dependent NADH:quinone oxidoreductase (Geobacillus kaustophilus (strain HTA426)).